The following is a 180-amino-acid chain: MPHYILKKSFYEQSSLTVAGKLLGKKLLFNQHQGIITETEAYIGQDDPAAHSARGYTKRTSVMFGSPGFSYVYFIYGMYYCLNVVTEQEGFPAAVLIRGIVLLSENKPNTIINGPGKLCKILQITKEHNNTDITQKYNFCICNTDINIDNYICTPRIGISKGKEKFWRFVIPDLTFLLNV.

Belongs to the DNA glycosylase MPG family.

This Ehrlichia chaffeensis (strain ATCC CRL-10679 / Arkansas) protein is Putative 3-methyladenine DNA glycosylase.